Here is a 529-residue protein sequence, read N- to C-terminus: MYRLLERTLDRFTGLVEYQPTYPFAAPTWVYLVGAILIQQLATRWYRYYKSWVNVPVVGGHGIIGSWIAAFRWTARARSLVNEGYQKYGDFAFQVSTPTRWEVFICNDEMVREYRNFTDERFSANALFEAKYTVPGAAEGVHKVPVPIVAKALTWQRTRAATKTDPYFEEFVKELQHAFDAETKFENEDWNDLCCFATGTRIVAHLTAKSLVGYPLSRDTELIDLFAEYGNAVPTSGFFIAMFPQILKPFAAKFCSAPKISARLDRIVMDELRKREANPRSEPQVQDITDWITFWSRTYPGTYTDQDIARSVVSAVFGAIHTTTQVLVHCLTDLAIRPEYIHPLREEVETILNRDDQQWTKEGLESMEKLDSFVKECQRFNPLDAGSLARRATKDFTFSKGLHIPEGTFVFTPNSPVLFDEKHYPDAQQFDGYRFYRLGRVTGRPLEYKFIAANLKYLQFGDGRHICPGRFMAADEIRLLLAHILVNYDIRPKDDGERPPNWTFKKILFPDMKGMVQLKRRSINISQPN.

2 helical membrane-spanning segments follow: residues 22 to 42 and 51 to 71; these read YPFA…QQLA and SWVN…IAAF. A heme-binding site is contributed by Cys467.

This sequence belongs to the cytochrome P450 family. Requires heme as cofactor.

It localises to the membrane. It participates in secondary metabolite biosynthesis. In terms of biological role, cytochrome P450 monooxygenase; part of the ATM2 gene cluster that mediates the biosynthesis of aflatrem, a tremorgenic mycotoxin with acute neurotoxic effects. Synthesis of geranylgeranyl diphosphate (GGPP) by AtmG (a GGPP synthase) precedes condensation of GGPP with indole 3-glycerol phosphate, followed by epoxidation and cyclization by AtmM (a FAD-dependent monooxygenase) and AtmC (a prenyltransferase) to produce paspaline. AtmB is also essential for paspaline production, but its exact role has not been identified yet. AtmP, a cytochrome P450 monooxygenase, subsequently converts paspaline to 13-desoxypaxilline via PC-M6 by removal of the C-30 methyl group and oxidation at C-10. AtmQ, a cytochrome P450 monooxygenase, then catalyzes the oxidation of 13-desoxypaxilline, first at C-7 to produce paspalicine and then at C-13 to form paspalinine. Finally, AtmD prenylates paspalinine to form aflatrem. The polypeptide is Cytochrome P450 monooxygenase atmQ (Aspergillus flavus).